The following is a 460-amino-acid chain: Bifunctional protein GlmU (460 aa).

The tract at residues 1–232 (MALNVVILAA…AIEVEGANNR (232 aa)) is pyrophosphorylase. Residues 8–11 (LAAG), Lys-22, Gln-73, 78–79 (GT), 100–102 (YGD), Gly-137, Glu-157, Asn-172, and Asn-230 contribute to the UDP-N-acetyl-alpha-D-glucosamine site. Residue Asp-102 participates in Mg(2+) binding. Asn-230 contributes to the Mg(2+) binding site. Residues 233-253 (VQLAQLERAYQAREAEKLMLA) are linker. Residues 254–460 (GANLRDPSRI…GWQRPVKIKK (207 aa)) are N-acetyltransferase. The UDP-N-acetyl-alpha-D-glucosamine site is built by Arg-336 and Lys-354. The Proton acceptor role is filled by His-366. UDP-N-acetyl-alpha-D-glucosamine contacts are provided by Tyr-369 and Asn-380. Acetyl-CoA-binding positions include Ala-383, 389-390 (NY), Ser-408, Ala-426, and Arg-443.

This sequence in the N-terminal section; belongs to the N-acetylglucosamine-1-phosphate uridyltransferase family. It in the C-terminal section; belongs to the transferase hexapeptide repeat family. In terms of assembly, homotrimer. Requires Mg(2+) as cofactor.

It is found in the cytoplasm. The catalysed reaction is alpha-D-glucosamine 1-phosphate + acetyl-CoA = N-acetyl-alpha-D-glucosamine 1-phosphate + CoA + H(+). It catalyses the reaction N-acetyl-alpha-D-glucosamine 1-phosphate + UTP + H(+) = UDP-N-acetyl-alpha-D-glucosamine + diphosphate. It participates in nucleotide-sugar biosynthesis; UDP-N-acetyl-alpha-D-glucosamine biosynthesis; N-acetyl-alpha-D-glucosamine 1-phosphate from alpha-D-glucosamine 6-phosphate (route II): step 2/2. Its pathway is nucleotide-sugar biosynthesis; UDP-N-acetyl-alpha-D-glucosamine biosynthesis; UDP-N-acetyl-alpha-D-glucosamine from N-acetyl-alpha-D-glucosamine 1-phosphate: step 1/1. It functions in the pathway bacterial outer membrane biogenesis; LPS lipid A biosynthesis. In terms of biological role, catalyzes the last two sequential reactions in the de novo biosynthetic pathway for UDP-N-acetylglucosamine (UDP-GlcNAc). The C-terminal domain catalyzes the transfer of acetyl group from acetyl coenzyme A to glucosamine-1-phosphate (GlcN-1-P) to produce N-acetylglucosamine-1-phosphate (GlcNAc-1-P), which is converted into UDP-GlcNAc by the transfer of uridine 5-monophosphate (from uridine 5-triphosphate), a reaction catalyzed by the N-terminal domain. The polypeptide is Bifunctional protein GlmU (Shewanella baltica (strain OS155 / ATCC BAA-1091)).